We begin with the raw amino-acid sequence, 547 residues long: Rho GTPase-activating protein 36 (547 aa).

An N-terminal signal peptide occupies residues 1–40 (MGGCIPFLKAARALCPRIMPPLLLLSAFIFLVSVLGGAPG). Residues 226 to 426 (MSLNPIAKQI…AMIDNWDVLF (201 aa)) enclose the Rho-GAP domain. The tract at residues 485–547 (AVLAQSKPSD…AKTGVSYFFP (63 aa)) is disordered. Residues 524 to 539 (EQDRPLLRVPREKEAK) show a composition bias toward basic and acidic residues.

May interacts (via the Rho-GAP domain) with the active form of RAC1. In terms of tissue distribution, detected in the outer root sheath of hair follicles at the level of the stem cell bulge, during the anagen and telogen phases of hair growth (at protein level).

In terms of biological role, GTPase activator for the Rho-type GTPases by converting them to an inactive GDP-bound state. This is Rho GTPase-activating protein 36 (ARHGAP36) from Homo sapiens (Human).